The primary structure comprises 427 residues: uncharacterized protein (427 aa).

It belongs to the MG032/MG096/MG288 family.

This is an uncharacterized protein from Mycoplasma pneumoniae (strain ATCC 29342 / M129 / Subtype 1) (Mycoplasmoides pneumoniae).